A 417-amino-acid chain; its full sequence is Probable medium-chain specific acyl-CoA dehydrogenase 10, mitochondrial (417 aa).

The N-terminal 15 residues, 1 to 15 (MLSRIATSSLGLSRS), are a transit peptide targeting the mitochondrion. FAD is bound by residues 148-157 (YCVTEPGAGS) and 181-183 (WIT). A substrate-binding site is contributed by serine 157. A substrate-binding site is contributed by 268–271 (DMTR). FAD-binding positions include 306 to 307 (HQ) and 364 to 368 (QIFGG). Glutamate 391 serves as the catalytic Proton acceptor. Residue glycine 392 participates in substrate binding. 393–395 (TSQ) contributes to the FAD binding site.

The protein belongs to the acyl-CoA dehydrogenase family. As to quaternary structure, homotetramer. It depends on FAD as a cofactor. Expressed in the epidermis and intestine.

It localises to the mitochondrion matrix. It carries out the reaction a medium-chain 2,3-saturated fatty acyl-CoA + oxidized [electron-transfer flavoprotein] + H(+) = a medium-chain (2E)-enoyl-CoA + reduced [electron-transfer flavoprotein]. Its pathway is lipid metabolism; mitochondrial fatty acid beta-oxidation. This enzyme is specific for acyl chain lengths of 4 to 16. This is Probable medium-chain specific acyl-CoA dehydrogenase 10, mitochondrial (acdh-10) from Caenorhabditis elegans.